Reading from the N-terminus, the 247-residue chain is Ribosomal RNA small subunit methyltransferase J (247 aa).

S-adenosyl-L-methionine is bound by residues 106–107 (RD), 122–123 (ER), and Asp-168.

This sequence belongs to the methyltransferase superfamily. RsmJ family.

It localises to the cytoplasm. The catalysed reaction is guanosine(1516) in 16S rRNA + S-adenosyl-L-methionine = N(2)-methylguanosine(1516) in 16S rRNA + S-adenosyl-L-homocysteine + H(+). Specifically methylates the guanosine in position 1516 of 16S rRNA. The chain is Ribosomal RNA small subunit methyltransferase J from Alcanivorax borkumensis (strain ATCC 700651 / DSM 11573 / NCIMB 13689 / SK2).